We begin with the raw amino-acid sequence, 341 residues long: tRNA (cytidine(56)-2'-O)-methyltransferase (341 aa).

S-adenosyl-L-methionine-binding positions include L79 and 104–108 (GAEKV). The 108-residue stretch at 187–294 (IIRHVETVYK…VAHADNLVSM (108 aa)) folds into the HD domain.

It belongs to the aTrm56 family. Homodimer.

The protein resides in the cytoplasm. It carries out the reaction cytidine(56) in tRNA + S-adenosyl-L-methionine = 2'-O-methylcytidine(56) in tRNA + S-adenosyl-L-homocysteine + H(+). In terms of biological role, specifically catalyzes the AdoMet-dependent 2'-O-ribose methylation of cytidine at position 56 in tRNAs. The chain is tRNA (cytidine(56)-2'-O)-methyltransferase from Picrophilus torridus (strain ATCC 700027 / DSM 9790 / JCM 10055 / NBRC 100828 / KAW 2/3).